The chain runs to 358 residues: Putative myc-like protein MYCLP1 (358 aa).

Disordered regions lie at residues Ala150–Lys171 and Gln219–Asp245. A compositionally biased stretch (basic and acidic residues) spans Pro227–Asp242. Positions Trp274 to Glu326 constitute a bHLH domain.

As to quaternary structure, efficient DNA binding requires dimerization with another bHLH protein. Binds DNA as a heterodimer with MAX. In terms of tissue distribution, detected in adult testis.

The protein resides in the nucleus. The sequence is that of Putative myc-like protein MYCLP1 (MYCLP1) from Homo sapiens (Human).